Here is a 256-residue protein sequence, read N- to C-terminus: Hydroxyacylglutathione hydrolase (256 aa).

7 residues coordinate Zn(2+): His-55, His-57, Asp-59, His-60, His-113, Asp-132, and His-170.

This sequence belongs to the metallo-beta-lactamase superfamily. Glyoxalase II family. Monomer. Zn(2+) is required as a cofactor.

It catalyses the reaction an S-(2-hydroxyacyl)glutathione + H2O = a 2-hydroxy carboxylate + glutathione + H(+). The protein operates within secondary metabolite metabolism; methylglyoxal degradation; (R)-lactate from methylglyoxal: step 2/2. Functionally, thiolesterase that catalyzes the hydrolysis of S-D-lactoyl-glutathione to form glutathione and D-lactic acid. The protein is Hydroxyacylglutathione hydrolase of Methylococcus capsulatus (strain ATCC 33009 / NCIMB 11132 / Bath).